The chain runs to 440 residues: Enolase (440 aa).

The substrate site is built by H159 and E168. E211 functions as the Proton donor in the catalytic mechanism. The Mg(2+) site is built by D245, E296, and D321. Substrate-binding residues include E296 and D321. K346 functions as the Proton acceptor in the catalytic mechanism. Residues 373–376 (SHRS) and K397 each bind substrate.

Belongs to the enolase family. Homodimer. Mg(2+) is required as a cofactor.

Its subcellular location is the cytoplasm. The catalysed reaction is (2R)-2-phosphoglycerate = phosphoenolpyruvate + H2O. The protein operates within carbohydrate degradation; glycolysis; pyruvate from D-glyceraldehyde 3-phosphate: step 4/5. The protein is Enolase (eno-1) of Tuber borchii (White truffle).